Consider the following 541-residue polypeptide: Arginine--tRNA ligase (541 aa).

Residues 123 to 133 (ANPTGFLHIGH) carry the 'HIGH' region motif.

Belongs to the class-I aminoacyl-tRNA synthetase family. As to quaternary structure, monomer.

The protein localises to the cytoplasm. It carries out the reaction tRNA(Arg) + L-arginine + ATP = L-arginyl-tRNA(Arg) + AMP + diphosphate. The chain is Arginine--tRNA ligase from Metamycoplasma arthritidis (strain 158L3-1) (Mycoplasma arthritidis).